The following is a 525-amino-acid chain: NAD(P)H-quinone oxidoreductase chain 4 1 (525 aa).

A run of 14 helical transmembrane segments spans residues 6 to 26, 36 to 56, 91 to 111, 115 to 135, 136 to 156, 169 to 189, 212 to 232, 243 to 263, 277 to 297, 314 to 334, 335 to 355, 375 to 397, 417 to 437, and 464 to 484; these read FPWLTTIILLPIAASLLIPII, WYALIVGLIDFALIVYAFYTS, LIILTGFITTLATLAAWPVTL, LFYFLLLAMYGGQIAVFAVQD, LLLFFLVWELELIPVYLLLAI, FILYTAGGSLFILLAALTMAF, LLLYAGFLIAYAIKLPIIPLH, TAPAHMLLAGILLKMGGYALI, FAPVLVVLGVVNIIYAALTSF, MGFVIIGFASFTDLGLSGAVL, QMVSHGLIGASLFFLVGATYD, IFAMFTACSMASLALPGMSGFVA, VIVVFLMAVGVILTPIYLLSM, and VFVIACLLVPIIGIGFYPKLL.

Belongs to the complex I subunit 4 family.

The protein resides in the cellular thylakoid membrane. The enzyme catalyses a plastoquinone + NADH + (n+1) H(+)(in) = a plastoquinol + NAD(+) + n H(+)(out). It carries out the reaction a plastoquinone + NADPH + (n+1) H(+)(in) = a plastoquinol + NADP(+) + n H(+)(out). In terms of biological role, NDH-1 shuttles electrons from NAD(P)H, via FMN and iron-sulfur (Fe-S) centers, to quinones in the respiratory chain. The immediate electron acceptor for the enzyme in this species is believed to be plastoquinone. Couples the redox reaction to proton translocation (for every two electrons transferred, four hydrogen ions are translocated across the cytoplasmic membrane), and thus conserves the redox energy in a proton gradient. The sequence is that of NAD(P)H-quinone oxidoreductase chain 4 1 from Trichormus variabilis (strain ATCC 29413 / PCC 7937) (Anabaena variabilis).